A 279-amino-acid chain; its full sequence is Large ribosomal subunit protein uL2 (279 aa).

2 disordered regions span residues K31–H61 and G222–K279. Over residues K49–H61 the composition is skewed to basic residues. The span at M232 to G242 shows a compositional bias: gly residues. Basic residues predominate over residues L259 to S268.

It belongs to the universal ribosomal protein uL2 family. In terms of assembly, part of the 50S ribosomal subunit. Forms a bridge to the 30S subunit in the 70S ribosome.

One of the primary rRNA binding proteins. Required for association of the 30S and 50S subunits to form the 70S ribosome, for tRNA binding and peptide bond formation. It has been suggested to have peptidyltransferase activity; this is somewhat controversial. Makes several contacts with the 16S rRNA in the 70S ribosome. The sequence is that of Large ribosomal subunit protein uL2 from Chlorobium chlorochromatii (strain CaD3).